The chain runs to 260 residues: Phosphatidylglycerol--prolipoprotein diacylglyceryl transferase (260 aa).

Helical transmembrane passes span 17 to 37, 52 to 72, 85 to 105, and 113 to 133; these read VVKWYGIMMALGVIALVSWIF, LTAAIIAIPSGIIFSKLLHVI, ILSGEGLTIFGAIIGATIGLW, and FNLGYLLDVAVPGILLGQAIG. Arginine 134 is an a 1,2-diacyl-sn-glycero-3-phospho-(1'-sn-glycerol) binding site. The next 3 helical transmembrane spans lie at 170–190, 198–218, and 227–247; these read VPTQAYEIIFLLCLFAFSLFI, GQLFLLYISLYAAWRVAIGFV, and GLEQAQVVGLILIALAVPFFI.

It belongs to the Lgt family.

It is found in the cell membrane. It catalyses the reaction L-cysteinyl-[prolipoprotein] + a 1,2-diacyl-sn-glycero-3-phospho-(1'-sn-glycerol) = an S-1,2-diacyl-sn-glyceryl-L-cysteinyl-[prolipoprotein] + sn-glycerol 1-phosphate + H(+). The protein operates within protein modification; lipoprotein biosynthesis (diacylglyceryl transfer). Catalyzes the transfer of the diacylglyceryl group from phosphatidylglycerol to the sulfhydryl group of the N-terminal cysteine of a prolipoprotein, the first step in the formation of mature lipoproteins. The polypeptide is Phosphatidylglycerol--prolipoprotein diacylglyceryl transferase (Dehalococcoides mccartyi (strain ATCC BAA-2266 / KCTC 15142 / 195) (Dehalococcoides ethenogenes (strain 195))).